Consider the following 255-residue polypeptide: Pyrroloquinoline-quinone synthase (255 aa).

The protein belongs to the PqqC family.

It catalyses the reaction 6-(2-amino-2-carboxyethyl)-7,8-dioxo-1,2,3,4,7,8-hexahydroquinoline-2,4-dicarboxylate + 3 O2 = pyrroloquinoline quinone + 2 H2O2 + 2 H2O + H(+). It functions in the pathway cofactor biosynthesis; pyrroloquinoline quinone biosynthesis. Its function is as follows. Ring cyclization and eight-electron oxidation of 3a-(2-amino-2-carboxyethyl)-4,5-dioxo-4,5,6,7,8,9-hexahydroquinoline-7,9-dicarboxylic-acid to PQQ. The chain is Pyrroloquinoline-quinone synthase from Cereibacter sphaeroides (strain KD131 / KCTC 12085) (Rhodobacter sphaeroides).